A 492-amino-acid polypeptide reads, in one-letter code: Tyrosine--tRNA ligase, mitochondrial (492 aa).

Tyrosine 89 is a binding site for L-tyrosine. Aspartate 93 contributes to the ATP binding site. The short motif at 94–103 (PTAQSLHLGN) is the 'HIGH' region element. L-tyrosine is bound by residues aspartate 133, tyrosine 239, glutamine 243, aspartate 246, and glutamine 265. A 'KMSKS' region motif is present at residues 303–307 (KFGKS). Lysine 306 contacts ATP.

This sequence belongs to the class-I aminoacyl-tRNA synthetase family. In terms of assembly, homodimer.

It localises to the mitochondrion matrix. It carries out the reaction tRNA(Tyr) + L-tyrosine + ATP = L-tyrosyl-tRNA(Tyr) + AMP + diphosphate + H(+). In terms of biological role, catalyzes the attachment of tyrosine to tRNA(Tyr) in a two-step reaction: tyrosine is first activated by ATP to form Tyr-AMP and then transferred to the acceptor end of tRNA(Tyr). This is Tyrosine--tRNA ligase, mitochondrial (MSY1) from Saccharomyces cerevisiae (strain ATCC 204508 / S288c) (Baker's yeast).